The primary structure comprises 424 residues: 3-ketoacyl-CoA thiolase B, peroxisomal (424 aa).

A peroxisome-targeting transit peptide spans 1–26; it reads MHRLQVVLGHLAGRPESSSALQAAPC. The segment at 1-26 is PTS2-type peroxisomal targeting signal; it reads MHRLQVVLGHLAGRPESSSALQAAPC. Cys123 (acyl-thioester intermediate) is an active-site residue. Residues Lys173 and Lys234 each carry the N6-acetyllysine modification. CoA is bound by residues Arg249, Thr252, and Ser276. Cys408 serves as the catalytic Proton donor/acceptor.

This sequence belongs to the thiolase-like superfamily. Thiolase family. Homodimer. Interacts (via PTS2-type peroxisomal targeting signal region) with PEX7; leading to its translocation into peroxisomes. As to expression, mainly expressed in liver; weaker levels in kidney, intestine and white adipose tissue.

The protein localises to the peroxisome. The enzyme catalyses an acyl-CoA + acetyl-CoA = a 3-oxoacyl-CoA + CoA. The catalysed reaction is 2 acetyl-CoA = acetoacetyl-CoA + CoA. It carries out the reaction hexanoyl-CoA + acetyl-CoA = 3-oxooctanoyl-CoA + CoA. It catalyses the reaction tetradecanoyl-CoA + acetyl-CoA = 3-oxohexadecanoyl-CoA + CoA. The enzyme catalyses 3-oxohexadecanedioyl-CoA + CoA = tetradecanedioyl-CoA + acetyl-CoA. The catalysed reaction is 3-oxo-(6Z,9Z,12Z,15Z,18Z,21Z)-tetracosahexaenoyl-CoA + CoA = (4Z,7Z,10Z,13Z,16Z,19Z)-docosahexaenoyl-CoA + acetyl-CoA. It functions in the pathway lipid metabolism; peroxisomal fatty acid beta-oxidation. Functionally, responsible for the thiolytic cleavage of straight chain 3-keto fatty acyl-CoAs (3-oxoacyl-CoAs). Plays an important role in fatty acid peroxisomal beta-oxidation. Catalyzes the cleavage of short, medium, long, and very long straight chain 3-oxoacyl-CoAs. This chain is 3-ketoacyl-CoA thiolase B, peroxisomal, found in Mus musculus (Mouse).